Here is a 314-residue protein sequence, read N- to C-terminus: Probable RuBisCO transcriptional regulator (314 aa).

In terms of domain architecture, HTH lysR-type spans 6–63; that stretch reads FTLDQLKIIKTIHREGSFKTAAKKLYISQPAVSRQVQNLERQLNTPIFYRDKRKARLT. A DNA-binding region (H-T-H motif) is located at residues 23 to 42; the sequence is FKTAAKKLYISQPAVSRQVQ.

It belongs to the LysR transcriptional regulatory family.

Its subcellular location is the plastid. The protein localises to the chloroplast. Functionally, trans-acting transcriptional regulator of RuBisCO genes (rbcL and rbcS) expression. The polypeptide is Probable RuBisCO transcriptional regulator (rbcR) (Emiliania huxleyi (Coccolithophore)).